The sequence spans 570 residues: Putative periplasmic trehalase (570 aa).

Positions 1–34 (MIPPEIRRSVLLQKAIKLALAGTLLTFASFSATA) are cleaved as a signal peptide. Substrate is bound by residues Arg159, 166-167 (WD), Asn203, 212-214 (RSQ), 284-286 (RPE), and Gly317. Catalysis depends on proton donor/acceptor residues Asp319 and Glu503. Glu518 serves as a coordination point for substrate. The tract at residues 544–570 (KPCDSVPSTRPASLSATPTKTPSAATQ) is disordered. Low complexity predominate over residues 554–570 (PASLSATPTKTPSAATQ).

It belongs to the glycosyl hydrolase 37 family. As to quaternary structure, monomer.

The protein localises to the periplasm. The enzyme catalyses alpha,alpha-trehalose + H2O = alpha-D-glucose + beta-D-glucose. Functionally, provides the cells with the ability to utilize trehalose at high osmolarity by splitting it into glucose molecules that can subsequently be taken up by the phosphotransferase-mediated uptake system. This Salmonella typhi protein is Putative periplasmic trehalase.